The following is a 602-amino-acid chain: Elongation factor 4 (602 aa).

The tr-type G domain occupies serine 7–threonine 196. Residues aspartate 19 to threonine 24 and asparagine 136 to aspartate 139 each bind GTP.

The protein belongs to the TRAFAC class translation factor GTPase superfamily. Classic translation factor GTPase family. LepA subfamily.

It is found in the cell inner membrane. It carries out the reaction GTP + H2O = GDP + phosphate + H(+). Its function is as follows. Required for accurate and efficient protein synthesis under certain stress conditions. May act as a fidelity factor of the translation reaction, by catalyzing a one-codon backward translocation of tRNAs on improperly translocated ribosomes. Back-translocation proceeds from a post-translocation (POST) complex to a pre-translocation (PRE) complex, thus giving elongation factor G a second chance to translocate the tRNAs correctly. Binds to ribosomes in a GTP-dependent manner. This Prochlorococcus marinus (strain MIT 9515) protein is Elongation factor 4.